The following is a 246-amino-acid chain: Carboxylesterase (246 aa).

The Nucleophile role is filled by Ser-93. Active-site charge relay system residues include Asp-192 and His-222.

This sequence belongs to the lipase/esterase LIP3/BchO family. In terms of assembly, homodimer.

The catalysed reaction is a carboxylic ester + H2O = an alcohol + a carboxylate + H(+). Involved in the detoxification of xenobiotics. Shows maximal activity with C6 substrates, with gradually decreasing activity from C8 to C12 substrates. No activity for higher chain length substrates acids rather than long-chain ones. The chain is Carboxylesterase (est) from Geobacillus stearothermophilus (Bacillus stearothermophilus).